The chain runs to 466 residues: Cysteine--tRNA ligase (466 aa).

Zn(2+) is bound at residue Cys29. The short motif at 31 to 41 (PTVYDFAHIGN) is the 'HIGH' region element. Positions 210, 235, and 239 each coordinate Zn(2+). Residues 267 to 271 (KMSKS) carry the 'KMSKS' region motif. Lys270 is a binding site for ATP.

It belongs to the class-I aminoacyl-tRNA synthetase family. Monomer. It depends on Zn(2+) as a cofactor.

Its subcellular location is the cytoplasm. It carries out the reaction tRNA(Cys) + L-cysteine + ATP = L-cysteinyl-tRNA(Cys) + AMP + diphosphate. The protein is Cysteine--tRNA ligase of Solibacter usitatus (strain Ellin6076).